The following is an 871-amino-acid chain: Coatomer subunit gamma-2 (871 aa).

Residues 1–11 are compositionally biased toward basic and acidic residues; sequence MIKKFDKKDEE. The interval 1 to 21 is disordered; sequence MIKKFDKKDEESGSGSNPFQH. 6 HEAT repeats span residues 64-101, 283-320, 321-355, 356-392, 395-430, and 467-504; these read TEATEAFFAMTRLFQSNDQTLRRMCYLTIKEMATISED, RELAPAVSVLQLFCSSPKPALRYAAVRTLNKVAMKHPS, AVTACNLDLENLITDSNRSIATLAITTLLKTGSES, SVDRLMKQISSFVSEISDEFKVVVVQAISALCQKYPR, SVMMTFLSNMLRDDGGFEYKRAIVDCIISIVEENPE, and PVPSKYIRFIFNRVVLENEAVRAAAVSALAKFGAQNES. Position 594 is a phosphothreonine (T594).

This sequence belongs to the COPG family. In terms of assembly, oligomeric complex. Binds to CDC42. Interacts with JAGN1. Interacts with TMED10 (via cytoplasmic domain).

It localises to the cytoplasm. The protein localises to the cytosol. It is found in the golgi apparatus membrane. The protein resides in the cytoplasmic vesicle. Its subcellular location is the COPI-coated vesicle membrane. The coatomer is a cytosolic protein complex that binds to dilysine motifs and reversibly associates with Golgi non-clathrin-coated vesicles, which further mediate biosynthetic protein transport from the ER, via the Golgi up to the trans Golgi network. Coatomer complex is required for budding from Golgi membranes, and is essential for the retrograde Golgi-to-ER transport of dilysine-tagged proteins. In mammals, the coatomer can only be recruited by membranes associated to ADP-ribosylation factors (ARFs), which are small GTP-binding proteins; the complex also influences the Golgi structural integrity, as well as the processing, activity, and endocytic recycling of LDL receptors. The chain is Coatomer subunit gamma-2 (COPG2) from Homo sapiens (Human).